We begin with the raw amino-acid sequence, 279 residues long: MLIIELLKAIFFGIIEGITEWLPVSSTGHLILVQEFIRLNQDKAFIEMFNIVIQLGAIIAVMLIYFERLNPFQPGKTAREVQLTWQLWLKVVIACIPSILIAVPLDNWFEAHFYFMVPIAIALIVYGIAFIWIEKRNAQQEPAVTELVRMSYKTAFFIGCFQVLSIVPGTSRSGATILGAIILGTSRTVAADFTFFLAIPTMFGYSGLKAVKFFLDGHHLDFAQVLILLVASLTAFVVSLLAIRFLTDYVKKHDFTIFGKYRIVLGSLLLIYSFFKFVF.

The next 8 helical transmembrane spans lie at 2 to 22 (LIIELLKAIFFGIIEGITEWL), 44 to 64 (AFIEMFNIVIQLGAIIAVMLI), 85 to 105 (WQLWLKVVIACIPSILIAVPL), 113 to 133 (FYFMVPIAIALIVYGIAFIWI), 163 to 183 (VLSIVPGTSRSGATILGAIIL), 188 to 208 (TVAADFTFFLAIPTMFGYSGL), 223 to 243 (AQVLILLVASLTAFVVSLLAI), and 255 to 275 (FTIFGKYRIVLGSLLLIYSFF).

This sequence belongs to the UppP family.

The protein localises to the cell membrane. It catalyses the reaction di-trans,octa-cis-undecaprenyl diphosphate + H2O = di-trans,octa-cis-undecaprenyl phosphate + phosphate + H(+). Its function is as follows. Catalyzes the dephosphorylation of undecaprenyl diphosphate (UPP). Confers resistance to bacitracin. This Streptococcus pyogenes serotype M5 (strain Manfredo) protein is Undecaprenyl-diphosphatase.